The chain runs to 502 residues: MADKADKMKARLPRGFVDRVPDDLRAAEKMMATIREVYDLYGFEPVETPLVEYTDALGKFLPDQDRPNEGVFSFQDDDEQWLSLRYDLTAPLARYVAENFETLPKPYRSYRNGWVFRNEKPGPGRFRQFMQFDADTVGAPNVSADAEMCMMMADTLERLGIQRGDYAIRVNNRKVLDGVLDAIGLEGEGNAAKRLNVLRAIDKLDKFGPEGVRLLLGKGRLDESGDFTKGAQLPEAAIEKVLAFTAAGGADGAQTIANLQAVVAGNAKGEEGVQELADMQALFFAGGYEGRVKIDPSVVRGLEYYTGPVFEAELLFDVTNEDGQKVVFGSVGGGGRYDGLVSRFRGEPVPATGFSIGVSRLMTALKNLGKLDVSDTVGPVVVLVMDKDTQNLGRYQKMVSDLRKAGIRAEMYVGGSGMKAQMKYADRRAAPCVVIQGSQEREAGEVQIKDLVEGKRLSAEIEDNVTWLESRPAQITVREDGLVDAVREILDAQARDRAEQSK.

This sequence belongs to the class-II aminoacyl-tRNA synthetase family. Homodimer.

It is found in the cytoplasm. It carries out the reaction tRNA(His) + L-histidine + ATP = L-histidyl-tRNA(His) + AMP + diphosphate + H(+). This is Histidine--tRNA ligase from Brucella abortus (strain S19).